We begin with the raw amino-acid sequence, 443 residues long: Xaa-Pro dipeptidase (443 aa).

Mn(2+) is bound by residues aspartate 246, aspartate 257, histidine 339, glutamate 384, and glutamate 423.

It belongs to the peptidase M24B family. Bacterial-type prolidase subfamily. Requires Mn(2+) as cofactor.

It catalyses the reaction Xaa-L-Pro dipeptide + H2O = an L-alpha-amino acid + L-proline. In terms of biological role, splits dipeptides with a prolyl residue in the C-terminal position. In Escherichia coli (strain SMS-3-5 / SECEC), this protein is Xaa-Pro dipeptidase.